The following is a 272-amino-acid chain: Streptomycin 3''-kinase (272 aa).

The active-site Proton acceptor is Asp190.

Belongs to the aminoglycoside phosphotransferase family.

The enzyme catalyses streptomycin + ATP = streptomycin 3''-phosphate + ADP + H(+). The aminoglycoside phosphotransferases achieve inactivation of their antibiotic substrates by phosphorylation. In Streptomyces griseus, this protein is Streptomycin 3''-kinase (aphE).